The following is a 105-amino-acid chain: Small ribosomal subunit protein bS18 (105 aa).

A disordered region spans residues 1 to 34 (MMINKEQDLNQLETNQEQSVEQNQTDEKRKPKPN). The segment covering 9–23 (LNQLETNQEQSVEQN) has biased composition (polar residues).

This sequence belongs to the bacterial ribosomal protein bS18 family. As to quaternary structure, part of the 30S ribosomal subunit. Forms a tight heterodimer with protein bS6.

Its function is as follows. Binds as a heterodimer with protein bS6 to the central domain of the 16S rRNA, where it helps stabilize the platform of the 30S subunit. This chain is Small ribosomal subunit protein bS18, found in Mycoplasma genitalium (strain ATCC 33530 / DSM 19775 / NCTC 10195 / G37) (Mycoplasmoides genitalium).